Reading from the N-terminus, the 873-residue chain is Alanine--tRNA ligase (873 aa).

4 residues coordinate Zn(2+): histidine 559, histidine 563, cysteine 661, and histidine 665.

This sequence belongs to the class-II aminoacyl-tRNA synthetase family. The cofactor is Zn(2+).

It is found in the cytoplasm. The enzyme catalyses tRNA(Ala) + L-alanine + ATP = L-alanyl-tRNA(Ala) + AMP + diphosphate. Catalyzes the attachment of alanine to tRNA(Ala) in a two-step reaction: alanine is first activated by ATP to form Ala-AMP and then transferred to the acceptor end of tRNA(Ala). Also edits incorrectly charged Ser-tRNA(Ala) and Gly-tRNA(Ala) via its editing domain. This is Alanine--tRNA ligase from Acaryochloris marina (strain MBIC 11017).